A 642-amino-acid polypeptide reads, in one-letter code: Probable glutamate--tRNA ligase, cytoplasmic (642 aa).

Arg152–Pro154 is a binding site for L-glutamate. Residues Pro157–Ala166 carry the 'HIGH' region motif. His162 serves as a coordination point for ATP. L-glutamate-binding positions include Asp188, Tyr326 to Cys330, and Arg344. ATP-binding positions include Glu347 and Val382–Arg386. Positions Val382–Arg386 match the 'KMSKS' region motif.

The protein belongs to the class-I aminoacyl-tRNA synthetase family. Glutamate--tRNA ligase type 2 subfamily.

It localises to the cytoplasm. The catalysed reaction is tRNA(Glu) + L-glutamate + ATP = L-glutamyl-tRNA(Glu) + AMP + diphosphate. This is Probable glutamate--tRNA ligase, cytoplasmic from Encephalitozoon cuniculi (strain GB-M1) (Microsporidian parasite).